The chain runs to 396 residues: NADH-ubiquinone oxidoreductase 49 kDa subunit (396 aa).

Belongs to the complex I 49 kDa subunit family.

The protein localises to the mitochondrion. It catalyses the reaction a ubiquinone + NADH + 5 H(+)(in) = a ubiquinol + NAD(+) + 4 H(+)(out). Core subunit of the mitochondrial membrane respiratory chain NADH dehydrogenase (Complex I) that is believed to belong to the minimal assembly required for catalysis. Complex I functions in the transfer of electrons from NADH to the respiratory chain. The immediate electron acceptor for the enzyme is believed to be ubiquinone. Component of the iron-sulfur (IP) fragment of the enzyme. Component of the iron-sulfur (IP) fragment of the enzyme. The sequence is that of NADH-ubiquinone oxidoreductase 49 kDa subunit (NAD7) from Reclinomonas americana.